The sequence spans 67 residues: Penaeidin-4c (67 aa).

A signal peptide spans 1-19; that stretch reads MRLVVCLVFLASFALVCQG. Cystine bridges form between C42/C56, C45/C63, and C57/C64. Arginine amide is present on R66.

Belongs to the penaeidin family.

The protein localises to the cytoplasmic granule. In terms of biological role, antibacterial and antifungal activity. Presents chitin-binding activity. The chain is Penaeidin-4c from Penaeus vannamei (Whiteleg shrimp).